The chain runs to 156 residues: Small ribosomal subunit protein uS7c (156 aa).

Belongs to the universal ribosomal protein uS7 family. As to quaternary structure, part of the 30S ribosomal subunit.

It localises to the plastid. The protein localises to the chloroplast. Its function is as follows. One of the primary rRNA binding proteins, it binds directly to 16S rRNA where it nucleates assembly of the head domain of the 30S subunit. The chain is Small ribosomal subunit protein uS7c (rps7) from Nephroselmis olivacea (Green alga).